The sequence spans 149 residues: Proline-rich acidic protein 1 (149 aa).

An N-terminal signal peptide occupies residues 1–20; that stretch reads MKRFLLATCLVAALLWEAGA. 2 disordered regions span residues 51–79 and 97–122; these read EPLEKDNQLGPLLPEPKQKPAAAEEKRPD and LQGPELDLDSIDHPMSDDVQDEEVPQ. Residues 66–79 show a composition bias toward basic and acidic residues; it reads PKQKPAAAEEKRPD.

Interacts with MTTP. Interacts with MAD1L1. As to expression, predominantly expressed in the intestinal epithelial cells than in the liver (at protein level). Abundantly expressed in the uterus during late pregnancy by uterus epithelial cells. After birth expression rapidly decreases and is no longer found in the uterus by the third day. Also highly expressed in the small intestine where it shows a proximal-distal graded expression.

It localises to the secreted. The protein resides in the endoplasmic reticulum. In terms of biological role, lipid-binding protein which promotes lipid absorption by facilitating MTTP-mediated lipid transfer (mainly triglycerides and phospholipids) and MTTP-mediated apoB lipoprotein assembly and secretion. Protects the gastrointestinal epithelium from irradiation-induced apoptosis. May play an important role in maintaining normal growth homeostasis in epithelial cells. Involved in p53/TP53-dependent cell survival after DNA damage. The sequence is that of Proline-rich acidic protein 1 (Prap1) from Mus musculus (Mouse).